A 467-amino-acid chain; its full sequence is Methylenetetrahydrofolate--tRNA-(uracil-5-)-methyltransferase TrmFO (467 aa).

Residue 11 to 16 (GAGLAG) participates in FAD binding.

It belongs to the MnmG family. TrmFO subfamily. The cofactor is FAD.

The protein resides in the cytoplasm. The catalysed reaction is uridine(54) in tRNA + (6R)-5,10-methylene-5,6,7,8-tetrahydrofolate + NADH + H(+) = 5-methyluridine(54) in tRNA + (6S)-5,6,7,8-tetrahydrofolate + NAD(+). It carries out the reaction uridine(54) in tRNA + (6R)-5,10-methylene-5,6,7,8-tetrahydrofolate + NADPH + H(+) = 5-methyluridine(54) in tRNA + (6S)-5,6,7,8-tetrahydrofolate + NADP(+). Functionally, catalyzes the folate-dependent formation of 5-methyl-uridine at position 54 (M-5-U54) in all tRNAs. The protein is Methylenetetrahydrofolate--tRNA-(uracil-5-)-methyltransferase TrmFO of Prochlorococcus marinus (strain MIT 9303).